The primary structure comprises 451 residues: Chromosomal replication initiator protein DnaA (451 aa).

The segment at 1 to 77 (MTENEQIFWN…EVYNAQISVD (77 aa)) is domain I, interacts with DnaA modulators. The interval 77-110 (DYVFEEDLMIEQNQTKINQKPKQQALNSLPTVTS) is domain II. A domain III, AAA+ region region spans residues 111–329 (DLNSKYSFEN…GALKDISLGA (219 aa)). The ATP site is built by G155, G157, K158, and T159. A domain IV, binds dsDNA region spans residues 330–451 (NFKQIDTITV…EIETIKNKIK (122 aa)).

Belongs to the DnaA family. In terms of assembly, oligomerizes as a right-handed, spiral filament on DNA at oriC.

It is found in the cytoplasm. Its function is as follows. Plays an essential role in the initiation and regulation of chromosomal replication. ATP-DnaA binds to the origin of replication (oriC) to initiate formation of the DNA replication initiation complex once per cell cycle. Binds the DnaA box (a 9 base pair repeat at the origin) and separates the double-stranded (ds)DNA. Forms a right-handed helical filament on oriC DNA; dsDNA binds to the exterior of the filament while single-stranded (ss)DNA is stabiized in the filament's interior. The ATP-DnaA-oriC complex binds and stabilizes one strand of the AT-rich DNA unwinding element (DUE), permitting loading of DNA polymerase. After initiation quickly degrades to an ADP-DnaA complex that is not apt for DNA replication. Binds acidic phospholipids. In Streptococcus pyogenes serotype M49 (strain NZ131), this protein is Chromosomal replication initiator protein DnaA.